Reading from the N-terminus, the 404-residue chain is Cysteine desulfurase IscS (404 aa).

Pyridoxal 5'-phosphate contacts are provided by residues 75 to 76 (AT), N155, Q183, and 203 to 205 (SAH). The residue at position 206 (K206) is an N6-(pyridoxal phosphate)lysine. Pyridoxal 5'-phosphate is bound at residue T243. C328 (cysteine persulfide intermediate) is an active-site residue. Position 328 (C328) interacts with [2Fe-2S] cluster.

Belongs to the class-V pyridoxal-phosphate-dependent aminotransferase family. NifS/IscS subfamily. In terms of assembly, homodimer. Forms a heterotetramer with IscU, interacts with other sulfur acceptors. Pyridoxal 5'-phosphate is required as a cofactor.

It localises to the cytoplasm. The enzyme catalyses (sulfur carrier)-H + L-cysteine = (sulfur carrier)-SH + L-alanine. The protein operates within cofactor biosynthesis; iron-sulfur cluster biosynthesis. In terms of biological role, master enzyme that delivers sulfur to a number of partners involved in Fe-S cluster assembly, tRNA modification or cofactor biosynthesis. Catalyzes the removal of elemental sulfur atoms from cysteine to produce alanine. Functions as a sulfur delivery protein for Fe-S cluster synthesis onto IscU, an Fe-S scaffold assembly protein, as well as other S acceptor proteins. The chain is Cysteine desulfurase IscS from Neisseria meningitidis serogroup A / serotype 4A (strain DSM 15465 / Z2491).